The following is a 555-amino-acid chain: Formate--tetrahydrofolate ligase (555 aa).

65 to 72 (TPAGEGKS) serves as a coordination point for ATP.

This sequence belongs to the formate--tetrahydrofolate ligase family.

The catalysed reaction is (6S)-5,6,7,8-tetrahydrofolate + formate + ATP = (6R)-10-formyltetrahydrofolate + ADP + phosphate. The protein operates within one-carbon metabolism; tetrahydrofolate interconversion. The chain is Formate--tetrahydrofolate ligase from Staphylococcus aureus (strain COL).